We begin with the raw amino-acid sequence, 418 residues long: tRNA wybutosine-synthesizing protein 2 (418 aa).

Residues serine 228, lysine 235, 275 to 276 (EI), and 302 to 303 (EN) each bind S-adenosyl-L-methionine.

Belongs to the class I-like SAM-binding methyltransferase superfamily. TRM5/TYW2 family.

It localises to the cytoplasm. Its subcellular location is the nucleus. The enzyme catalyses 4-demethylwyosine(37) in tRNA(Phe) + S-adenosyl-L-methionine = 4-demethyl-7-[(3S)-3-amino-3-carboxypropyl]wyosine(37) in tRNA(Phe) + S-methyl-5'-thioadenosine + H(+). It functions in the pathway tRNA modification; wybutosine-tRNA(Phe) biosynthesis. S-adenosyl-L-methionine-dependent transferase that acts as a component of the wybutosine biosynthesis pathway. Wybutosine is a hyper modified guanosine with a tricyclic base found at the 3'-position adjacent to the anticodon of eukaryotic phenylalanine tRNA. Catalyzes the transfer of the alpha-amino-alpha-carboxypropyl (acp) group from S-adenosyl-L-methionine to the C-7 position of 4-demethylwyosine (imG-14) to produce wybutosine-86. The chain is tRNA wybutosine-synthesizing protein 2 (trm12) from Schizosaccharomyces pombe (strain 972 / ATCC 24843) (Fission yeast).